The following is a 478-amino-acid chain: MTSSTTSSIVTRFAPSPTGFLHIGGARTALFNWLYARGRGGKMLLRIEDTDRERSTTAAIDAILDGLKWLELDWDGEVIYQYSRAARHREVAEQLLATGMAYRCYATAEELVAMREKARAEGRTRLYDGMWRDRDPKEAPEGVKPTIRLRAPLTGETMVEDQVQGRVVWQNENLDDLVLLRGDGNPTYMLAVVVDDHDMGVTHVIRGDDHLINAARQKQIYDALGWTVPSMSHIPLIHGPDGSKLSKRHGALGVDAYRAMGYLPSALRNYLVRLGWSHGDQEIFSTEEMIKAFDLPAIGRSAARFDFAKLENLNGHYIRHSDDAELVRQFEDVLNYVPNGAALKAKLNDATRAQLTQAMPSLKERAKTLLELIDGAAFIFADRPLPIDAKAAALLTPESRALIGRLHAALSAVEPWSGPATEAALRAFAEANNLKLGAVAQPLRAALTGRTTSPGIFDVLAILGRDESLGRLKDQAIA.

Residues Pro-15 to Gly-25 carry the 'HIGH' region motif. Residues Lys-244–Arg-248 carry the 'KMSKS' region motif. Lys-247 is an ATP binding site.

Belongs to the class-I aminoacyl-tRNA synthetase family. Glutamate--tRNA ligase type 1 subfamily. Monomer.

The protein localises to the cytoplasm. The catalysed reaction is tRNA(Glu) + L-glutamate + ATP = L-glutamyl-tRNA(Glu) + AMP + diphosphate. In terms of biological role, catalyzes the attachment of glutamate to tRNA(Glu) in a two-step reaction: glutamate is first activated by ATP to form Glu-AMP and then transferred to the acceptor end of tRNA(Glu). The protein is Glutamate--tRNA ligase of Bradyrhizobium sp. (strain ORS 278).